We begin with the raw amino-acid sequence, 857 residues long: MSNSSARPESLGEYLAHLPLSDEQRAELASCTSFSELHQRLAGNATATTTEAVQASVGPRLTVGSAAELEDAEMLGVDGSGRLCLKIAPPIKRTRVVPEPWRTNVLIRMWRRMTGRTNAPQPPKRELPPARWRTVGSIRRYILLTLMIGQTLVAGWYMKGILPYQGWSFVDLDEVVNQPLWDTVVQVWPYALQTSILILFGILFCWVSAGFWTALMGFLELLTGRDKYRISGSSAGSEPIAPEARTALVMPICNEDVPRVFAGLRATFESVAASGNLDRFDFFVLSDTNDTDIAVAEQQAWLDVCRETKGFGRIFYRRRRRRVKRKSGNLDDFCRRWGGEYKYMVVLDADSVMSGECLSSLVRLMEANPDAGIIQTAPKASGMDTLYARMQQFATRVYGPLFTAGLHFWQLGESHYWGHNAIIRMKPFIEHCALAPLPGKGAFAGAILSHDFVEAALMRRAGWGVWIAYDLPGSYEELPPNLLDELKRDRRWCHGNLMNFRLFLVKGMHPVHRAVFLTGVMSYLSAPLWFFFLVLSTALLATNTLMEPQYFIEPYQLYPLWPQWHPEKAVALFSTTIVLLFLPKLLSIILIWAKGAVEFGGRIKVTLSMLMEMLFSMLLAPVRMIFHTRFVLAAFLGWAATWNSPQRDDDSTPWSEAVRRHGPQTLLGIAWAALVAWLNPSFLWWLAPIVGSLVLSIPVSVISSRTRLGLAAKDEKLFLIPEEYATPQELLATDQYTHENRWHALHDGFVRAVVDPRQNALACAMATARHGQAAPIEAMRAERLAKAIEVGPKGLDLGTRLALLSDPVALARLHAQVWAEHNAAWIDVWRASINNDPHSPLLPLHPANEAQPSLVGA.

Helical transmembrane passes span 142–162, 196–216, 515–535, 572–592, 606–626, and 682–702; these read ILLT…KGIL, ILIL…TALM, VFLT…FLVL, LFST…ILIW, TLSM…RMIF, and FLWW…VSVI.

It belongs to the glycosyltransferase 2 family. OpgH subfamily.

It localises to the cell inner membrane. It participates in glycan metabolism; osmoregulated periplasmic glucan (OPG) biosynthesis. Functionally, involved in the biosynthesis of osmoregulated periplasmic glucans (OPGs). This Pseudomonas putida (strain W619) protein is Glucans biosynthesis glucosyltransferase H.